The following is a 528-amino-acid chain: U3 small nucleolar RNA-associated protein 15 homolog (528 aa).

Alanine 2 bears the N-acetylalanine mark. 7 WD repeats span residues 36–75 (KEFG…PVKT), 78–117 (RFKD…PLRQ), 120–159 (GHTK…EILT), 162–202 (EHSD…NVLC), 204–242 (EHGQ…QLLV), 246–285 (NHHK…VVHS), and 287–326 (DYAA…KKTS). Lysine 249 is covalently cross-linked (Glycyl lysine isopeptide (Lys-Gly) (interchain with G-Cter in SUMO2)). Positions 496–528 (RNDSDPVPEHVPAELPEEKTESPTQPSDTDKNS) are disordered. Residues 497–516 (NDSDPVPEHVPAELPEEKTE) show a composition bias toward basic and acidic residues.

In terms of assembly, part of the small subunit (SSU) processome, composed of more than 70 proteins and the RNA chaperone small nucleolar RNA (snoRNA) U3. May be a component of the proposed t-UTP subcomplex of the ribosomal small subunit (SSU) processome containing at least UTP4, WDR43, HEATR1, UTP15, WDR75. Interacts directly with UTP4 and WDR43.

The protein resides in the nucleus. It localises to the nucleolus. Its function is as follows. Ribosome biogenesis factor. Involved in nucleolar processing of pre-18S ribosomal RNA. Required for optimal pre-ribosomal RNA transcription by RNA polymerase I. Part of the small subunit (SSU) processome, first precursor of the small eukaryotic ribosomal subunit. During the assembly of the SSU processome in the nucleolus, many ribosome biogenesis factors, an RNA chaperone and ribosomal proteins associate with the nascent pre-rRNA and work in concert to generate RNA folding, modifications, rearrangements and cleavage as well as targeted degradation of pre-ribosomal RNA by the RNA exosome. This chain is U3 small nucleolar RNA-associated protein 15 homolog (Utp15), found in Mus musculus (Mouse).